Reading from the N-terminus, the 223-residue chain is Triosephosphate isomerase (223 aa).

Residue 6-8 participates in substrate binding; the sequence is NLK. His86 acts as the Electrophile in catalysis. Glu151 (proton acceptor) is an active-site residue. Residues Gly157 and Ser187 each coordinate substrate.

Belongs to the triosephosphate isomerase family. Homodimer.

Its subcellular location is the cytoplasm. It carries out the reaction D-glyceraldehyde 3-phosphate = dihydroxyacetone phosphate. Its pathway is carbohydrate biosynthesis; gluconeogenesis. It functions in the pathway carbohydrate degradation; glycolysis; D-glyceraldehyde 3-phosphate from glycerone phosphate: step 1/1. Functionally, involved in the gluconeogenesis. Catalyzes stereospecifically the conversion of dihydroxyacetone phosphate (DHAP) to D-glyceraldehyde-3-phosphate (G3P). The chain is Triosephosphate isomerase from Campylobacter jejuni subsp. doylei (strain ATCC BAA-1458 / RM4099 / 269.97).